We begin with the raw amino-acid sequence, 117 residues long: Appetite-regulating hormone (117 aa).

Positions 1-23 (MVSSATICSLLLLSMLWMDMAMA) are cleaved as a signal peptide. Ser-26 carries O-decanoyl serine; alternate lipidation. Residue Ser-26 is the site of O-hexanoyl serine; alternate attachment. Residue Ser-26 is the site of O-octanoyl serine; alternate attachment. Residues 28–68 (LSPEHQKAQQRKESKKPPAKLQPRALEGWLHPEDRGQAEEA) form a disordered region. Basic and acidic residues predominate over residues 31 to 43 (EHQKAQQRKESKK). A propeptide spans 52-75 (ALEGWLHPEDRGQAEEAEEELEIR) (removed in mature form). Leu-98 is modified (leucine amide). The propeptide at 99-117 (GKFLQDILWEEVKEAPANK) is removed in mature form.

Belongs to the motilin family. Post-translationally, O-octanoylated by GOAT/MBOAT4. O-octanoylation is essential for ghrelin activity. The replacement of Ser-26 by aromatic tryptophan preserves ghrelin activity. Amidation of Leu-98 is essential for obestatin activity. As to expression, ghrelin is broadly expressed with higher expression in the stomach. Very low levels are detected in the hypothalamus, heart, lung, pancreas, intestine and adipose tissue. Obestatin is most highly expressed in jejunum, and also found in duodenum, stomach, pituitary, ileum, liver, hypothalamus and heart. Expressed in low levels in pancreas, cerebellum, cerebrum, kidney, testis, ovary colon and lung.

Its subcellular location is the secreted. In terms of biological role, ghrelin is the ligand for growth hormone secretagogue receptor type 1 (GHSR). Induces the release of growth hormone from the pituitary. Has an appetite-stimulating effect, induces adiposity and stimulates gastric acid secretion. Involved in growth regulation. Its function is as follows. Obestatin may be the ligand for GPR39. May have an appetite-reducing effect resulting in decreased food intake. May reduce gastric emptying activity and jejunal motility. The sequence is that of Appetite-regulating hormone (Ghrl) from Rattus norvegicus (Rat).